Here is an 80-residue protein sequence, read N- to C-terminus: Translation initiation factor IF-1, chloroplastic (80 aa).

In terms of domain architecture, S1-like spans 1 to 74 (MKEQKWIHEG…TRGRIIYRLR (74 aa)).

Belongs to the IF-1 family. In terms of assembly, component of the 30S ribosomal translation pre-initiation complex which assembles on the 30S ribosome in the order IF-2 and IF-3, IF-1 and N-formylmethionyl-tRNA(fMet); mRNA recruitment can occur at any time during PIC assembly.

The protein localises to the plastid. It is found in the chloroplast. Functionally, one of the essential components for the initiation of protein synthesis. Stabilizes the binding of IF-2 and IF-3 on the 30S subunit to which N-formylmethionyl-tRNA(fMet) subsequently binds. Helps modulate mRNA selection, yielding the 30S pre-initiation complex (PIC). Upon addition of the 50S ribosomal subunit IF-1, IF-2 and IF-3 are released leaving the mature 70S translation initiation complex. The sequence is that of Translation initiation factor IF-1, chloroplastic from Illicium oligandrum (Star anise).